Consider the following 1089-residue polypeptide: Carbamoyl phosphate synthase large chain (1089 aa).

Residues 1-399 (MPKRTDIKSI…SIQKALCSLE (399 aa)) are carboxyphosphate synthetic domain. ATP contacts are provided by arginine 127, arginine 167, glycine 173, glycine 174, glutamate 206, leucine 208, glutamate 213, glycine 239, valine 240, histidine 241, glutamine 283, and glutamate 297. The 196-residue stretch at 131–326 (KECMKKIGMD…IAKVATLLAV (196 aa)) folds into the ATP-grasp 1 domain. Mg(2+) is bound by residues glutamine 283, glutamate 297, and asparagine 299. Mn(2+) contacts are provided by glutamine 283, glutamate 297, and asparagine 299. Residues 400–553 (RSLSGFDRVK…NVSELTQSKN (154 aa)) are oligomerization domain. The tract at residues 554–951 (DAKDKKEKKV…SYAKSQIASF (398 aa)) is carbamoyl phosphate synthetic domain. Positions 680–871 (AEFITKLGIN…LAKVATRVMW (192 aa)) constitute an ATP-grasp 2 domain. ATP-binding residues include arginine 716, glutamine 755, leucine 757, glutamate 762, glycine 787, isoleucine 788, histidine 789, serine 790, glutamine 830, and glutamate 842. Mg(2+)-binding residues include glutamine 830, glutamate 842, and asparagine 844. Residues glutamine 830, glutamate 842, and asparagine 844 each contribute to the Mn(2+) site. Positions 952–1089 (NHLPEQGVVF…VKSLQEWLKS (138 aa)) constitute an MGS-like domain. Positions 952-1089 (NHLPEQGVVF…VKSLQEWLKS (138 aa)) are allosteric domain.

Belongs to the CarB family. As to quaternary structure, composed of two chains; the small (or glutamine) chain promotes the hydrolysis of glutamine to ammonia, which is used by the large (or ammonia) chain to synthesize carbamoyl phosphate. Tetramer of heterodimers (alpha,beta)4. Mg(2+) serves as cofactor. The cofactor is Mn(2+).

It carries out the reaction hydrogencarbonate + L-glutamine + 2 ATP + H2O = carbamoyl phosphate + L-glutamate + 2 ADP + phosphate + 2 H(+). The enzyme catalyses hydrogencarbonate + NH4(+) + 2 ATP = carbamoyl phosphate + 2 ADP + phosphate + 2 H(+). It functions in the pathway amino-acid biosynthesis; L-arginine biosynthesis; carbamoyl phosphate from bicarbonate: step 1/1. Its pathway is pyrimidine metabolism; UMP biosynthesis via de novo pathway; (S)-dihydroorotate from bicarbonate: step 1/3. Its function is as follows. Large subunit of the glutamine-dependent carbamoyl phosphate synthetase (CPSase). CPSase catalyzes the formation of carbamoyl phosphate from the ammonia moiety of glutamine, carbonate, and phosphate donated by ATP, constituting the first step of 2 biosynthetic pathways, one leading to arginine and/or urea and the other to pyrimidine nucleotides. The large subunit (synthetase) binds the substrates ammonia (free or transferred from glutamine from the small subunit), hydrogencarbonate and ATP and carries out an ATP-coupled ligase reaction, activating hydrogencarbonate by forming carboxy phosphate which reacts with ammonia to form carbamoyl phosphate. In Campylobacter jejuni subsp. jejuni serotype O:2 (strain ATCC 700819 / NCTC 11168), this protein is Carbamoyl phosphate synthase large chain.